A 341-amino-acid polypeptide reads, in one-letter code: Methionine import ATP-binding protein MetN (341 aa).

The ABC transporter domain maps to 9 to 247 (ISVEQLNKEI…PQSAITEELF (239 aa)). ATP is bound at residue 41-48 (GHSGSGKS).

Belongs to the ABC transporter superfamily. Methionine importer (TC 3.A.1.24) family. As to quaternary structure, the complex is composed of two ATP-binding proteins (MetN), two transmembrane proteins (MetI) and a solute-binding protein (MetQ).

It is found in the cell inner membrane. The catalysed reaction is L-methionine(out) + ATP + H2O = L-methionine(in) + ADP + phosphate + H(+). It carries out the reaction D-methionine(out) + ATP + H2O = D-methionine(in) + ADP + phosphate + H(+). Its function is as follows. Part of the ABC transporter complex MetNIQ involved in methionine import. Responsible for energy coupling to the transport system. The protein is Methionine import ATP-binding protein MetN of Chlamydia abortus (strain DSM 27085 / S26/3) (Chlamydophila abortus).